Here is a 312-residue protein sequence, read N- to C-terminus: Aspartate carbamoyltransferase catalytic subunit (312 aa).

Residues Arg58 and Thr59 each contribute to the carbamoyl phosphate site. Residue Lys86 participates in L-aspartate binding. Positions 108, 136, and 139 each coordinate carbamoyl phosphate. L-aspartate contacts are provided by Arg169 and Arg223. Carbamoyl phosphate contacts are provided by Gly264 and Pro265.

It belongs to the aspartate/ornithine carbamoyltransferase superfamily. ATCase family. In terms of assembly, heterododecamer (2C3:3R2) of six catalytic PyrB chains organized as two trimers (C3), and six regulatory PyrI chains organized as three dimers (R2).

It carries out the reaction carbamoyl phosphate + L-aspartate = N-carbamoyl-L-aspartate + phosphate + H(+). Its pathway is pyrimidine metabolism; UMP biosynthesis via de novo pathway; (S)-dihydroorotate from bicarbonate: step 2/3. Functionally, catalyzes the condensation of carbamoyl phosphate and aspartate to form carbamoyl aspartate and inorganic phosphate, the committed step in the de novo pyrimidine nucleotide biosynthesis pathway. The protein is Aspartate carbamoyltransferase catalytic subunit of Desulfitobacterium hafniense (strain DSM 10664 / DCB-2).